We begin with the raw amino-acid sequence, 226 residues long: PKHD-type hydroxylase PiuC (226 aa).

Residues 78–178 (KVFPPLFNCY…RYASFFWTQS (101 aa)) enclose the Fe2OG dioxygenase domain. Residues H96, D98, and H159 each contribute to the Fe cation site. 2-oxoglutarate is bound at residue R169.

Fe(2+) serves as cofactor. The cofactor is L-ascorbate.

In Pseudomonas aeruginosa (strain ATCC 15692 / DSM 22644 / CIP 104116 / JCM 14847 / LMG 12228 / 1C / PRS 101 / PAO1), this protein is PKHD-type hydroxylase PiuC (piuC).